The chain runs to 162 residues: MAFTFAAFCYMLTLVLCASLIFFIIWHIIAFDDLRTDFKDPIEQGNPSRARERIKNVERVCCLLRKLVVPEYCIHGLFCLMFMCAAEWVTLGLNIPLLFYHLWRYFHRPADGSEVMFDPVSIMNVDILNYCQKEAWCKLAFYLLSFFYYLYRVGATVRYVSA.

The Cytoplasmic segment spans residues 1–10 (MAFTFAAFCY). Residues 11–31 (MLTLVLCASLIFFIIWHIIAF) form a helical membrane-spanning segment. Topologically, residues 32–72 (DDLRTDFKDPIEQGNPSRARERIKNVERVCCLLRKLVVPEY) are lumenal. A helical membrane pass occupies residues 73–93 (CIHGLFCLMFMCAAEWVTLGL). Residues 94–138 (NIPLLFYHLWRYFHRPADGSEVMFDPVSIMNVDILNYCQKEAWCK) are Cytoplasmic-facing. Residues 139–161 (LAFYLLSFFYYLYRVGATVRYVS) traverse the membrane as a helical segment. Alanine 162 is a topological domain (lumenal).

The protein belongs to the cornichon family.

The protein localises to the membrane. Regulates the trafficking and gating properties of AMPA-selective glutamate receptors (AMPARs). This Xenopus laevis (African clawed frog) protein is Protein cornichon homolog 2 (cnih2).